Consider the following 223-residue polypeptide: Endonuclease V (223 aa).

D35 and D103 together coordinate Mg(2+).

It belongs to the endonuclease V family. Requires Mg(2+) as cofactor.

The protein localises to the cytoplasm. It carries out the reaction Endonucleolytic cleavage at apurinic or apyrimidinic sites to products with a 5'-phosphate.. In terms of biological role, DNA repair enzyme involved in the repair of deaminated bases. Selectively cleaves double-stranded DNA at the second phosphodiester bond 3' to a deoxyinosine leaving behind the intact lesion on the nicked DNA. The sequence is that of Endonuclease V from Shigella flexneri serotype 5b (strain 8401).